Reading from the N-terminus, the 415-residue chain is Serine hydroxymethyltransferase (415 aa).

Residues L121 and 125-127 (GHL) contribute to the (6S)-5,6,7,8-tetrahydrofolate site. Position 230 is an N6-(pyridoxal phosphate)lysine (K230).

The protein belongs to the SHMT family. Homodimer. It depends on pyridoxal 5'-phosphate as a cofactor.

The protein resides in the cytoplasm. It carries out the reaction (6R)-5,10-methylene-5,6,7,8-tetrahydrofolate + glycine + H2O = (6S)-5,6,7,8-tetrahydrofolate + L-serine. It functions in the pathway one-carbon metabolism; tetrahydrofolate interconversion. It participates in amino-acid biosynthesis; glycine biosynthesis; glycine from L-serine: step 1/1. Functionally, catalyzes the reversible interconversion of serine and glycine with tetrahydrofolate (THF) serving as the one-carbon carrier. This reaction serves as the major source of one-carbon groups required for the biosynthesis of purines, thymidylate, methionine, and other important biomolecules. Also exhibits THF-independent aldolase activity toward beta-hydroxyamino acids, producing glycine and aldehydes, via a retro-aldol mechanism. The protein is Serine hydroxymethyltransferase of Syntrophomonas wolfei subsp. wolfei (strain DSM 2245B / Goettingen).